A 782-amino-acid chain; its full sequence is MSSASNNGPSADQSVQDLQMEVERLTRELDQVSSASAQSAQYGLSLLEEKSALQQKCEELETLYDNTRHELDITQEALTKFQTSQKVTNKTGIEQEDALLNESAARETSLNLQIFDLENELKQLRHELERVRNERDRMLQENSDFGRDKSDSEADRLRLKSELKDLKFRETRMLSEYSELEEENISLQKQVSSLRSSQVEFEGAKHEIRRLTEEVELLNQQVDELANLKKIAEKQMEEALETLQGEREAKYALKKELDGHLNRESMYHISNLAYSIRSNMEDNASNNSDGEEENLALKRLEADLSTELKSPDGTKCDLFSEIHLNELKKLEKQLESMESEKTHLTANLREAQTSLDKSQNELQNFMSRLALLAAHVDALVQLKKQIDVKEQGKEGGQKKDELEQQLRALISQYANWFTLSAKEIDGLKTDIAELQKGLNYTDATTTLRNEVTNLKNKLLATEQKSLDLQSDVQTLTHISQNAGQSLGSARSTLVALSDDLAQLYHLVCTVNGETPTRVLLDHKTDDMSFENDSLTAIQSQFKSDVFIAKPQIVEDLQGLADSVEIKKYVDTVSDQIKYLKTAVEHTIDMNKHKIRSEGGDALEKVNTEEMEELQEQIVKLKSLLSVKREQIGTLRNVLKSNKQTAEVALTNLKSKYENEKIIVSDTMSKLRNELRLLKEDAATFSSLRAMFAARCEEYVTQVDDLNRQLEAAEEEKKTLNQLLRLAVQQKLALTQRLEEMEMDREMRHVRRPMPAQRGTSGKSSFSTRPSSRNPASSNANPF.

The stretch at 15-77 forms a coiled coil; that stretch reads VQDLQMEVER…RHELDITQEA (63 aa). A Phosphoserine modification is found at S103. Residues 107-249 adopt a coiled-coil conformation; the sequence is ETSLNLQIFD…LETLQGEREA (143 aa). S285, S288, and S305 each carry phosphoserine. The residue at position 306 (T306) is a Phosphothreonine. S310 carries the phosphoserine modification. 2 coiled-coil regions span residues 320–368 and 444–477; these read SEIH…FMSR and TTTL…TLTH. At S528 the chain carries Phosphoserine. 2 coiled-coil regions span residues 603–630 and 695–743; these read EKVN…KREQ and CEEY…MEMD. The tract at residues 699–722 is interaction with Rab6; that stretch reads VTQVDDLNRQLEAAEEEKKTLNQL. The disordered stretch occupies residues 744–782; that stretch reads REMRHVRRPMPAQRGTSGKSSFSTRPSSRNPASSNANPF. The span at 757 to 767 shows a compositional bias: polar residues; the sequence is RGTSGKSSFST. Over residues 768-782 the composition is skewed to low complexity; the sequence is RPSSRNPASSNANPF.

The protein belongs to the BicD family. As to quaternary structure, may homodimerize but does not interact with BicDR. Interacts (via C-terminal domain) with Rab6. In ovaries, expressed in oocyte and nurse cells.

It is found in the cytoplasm. The protein localises to the cytoskeleton. Its function is as follows. This protein is essential for differentiation. It may play a role in localizing of Nanos (a maternal determinant) activity in oocytes. Functions redundantly with BicDR. During oogenesis, plays a specific role, together with Rab6 but independently of Sec5, in the polarization of the oocyte microtubule cytoskeleton, in oskar mRNA localization and in the anterodorsal secretion of grk. Plays a role in the biogenesis of annulate lamellae containing nuclear pore complex components. During macrochaetae development, together with BicDR, involved in Rab 6 and Spn-F stability and distribution and actin cytoskeleton organization. The chain is Protein bicaudal D from Drosophila melanogaster (Fruit fly).